We begin with the raw amino-acid sequence, 245 residues long: 1-(5-phosphoribosyl)-5-[(5-phosphoribosylamino)methylideneamino] imidazole-4-carboxamide isomerase (245 aa).

Asp7 serves as the catalytic Proton acceptor. The active-site Proton donor is Asp129.

Belongs to the HisA/HisF family.

It is found in the cytoplasm. It carries out the reaction 1-(5-phospho-beta-D-ribosyl)-5-[(5-phospho-beta-D-ribosylamino)methylideneamino]imidazole-4-carboxamide = 5-[(5-phospho-1-deoxy-D-ribulos-1-ylimino)methylamino]-1-(5-phospho-beta-D-ribosyl)imidazole-4-carboxamide. The protein operates within amino-acid biosynthesis; L-histidine biosynthesis; L-histidine from 5-phospho-alpha-D-ribose 1-diphosphate: step 4/9. This Shewanella baltica (strain OS195) protein is 1-(5-phosphoribosyl)-5-[(5-phosphoribosylamino)methylideneamino] imidazole-4-carboxamide isomerase.